Consider the following 795-residue polypeptide: Lon protease (795 aa).

The region spanning 11-203 is the Lon N-terminal domain; sequence GRVIPVSDIV…KFIDYLLKQK (193 aa). An ATP-binding site is contributed by 356–363; sequence GPPGVGKT. In terms of domain architecture, Lon proteolytic spans 593–771; it reads DNVPGVVTGL…EDVLRETLGI (179 aa). Residues Ser-677 and Lys-720 contribute to the active site.

It belongs to the peptidase S16 family. As to quaternary structure, homohexamer. Organized in a ring with a central cavity.

It localises to the cytoplasm. It carries out the reaction Hydrolysis of proteins in presence of ATP.. Functionally, ATP-dependent serine protease that mediates the selective degradation of mutant and abnormal proteins as well as certain short-lived regulatory proteins. Required for cellular homeostasis and for survival from DNA damage and developmental changes induced by stress. Degrades polypeptides processively to yield small peptide fragments that are 5 to 10 amino acids long. Binds to DNA in a double-stranded, site-specific manner. This is Lon protease from Clostridium beijerinckii (strain ATCC 51743 / NCIMB 8052) (Clostridium acetobutylicum).